The chain runs to 820 residues: Disintegrin and metalloproteinase domain-containing protein 29 (820 aa).

The N-terminal stretch at 1–18 (MKMLLLLHCLGVFLSCSG) is a signal peptide. Residues 19–193 (HIQDEHPQYH…TQKQSSYVGW (175 aa)) constitute a propeptide that is removed on maturation. Topologically, residues 194-674 (WIHFRIVEIV…GPPPKRKKKK (481 aa)) are extracellular. The Peptidase M12B domain maps to 198–390 (RIVEIVVVID…RTKCLLETVH (193 aa)). Residues Asn-217 and Asn-320 are each glycosylated (N-linked (GlcNAc...) asparagine). Cystine bridges form between Cys-307–Cys-384, Cys-347–Cys-369, and Cys-349–Cys-354. Residues Asn-368, Asn-428, Asn-469, Asn-538, Asn-545, Asn-558, and Asn-564 are each glycosylated (N-linked (GlcNAc...) asparagine). One can recognise a Disintegrin domain in the interval 397 to 483 (VKRCGNGVVE…KCPDDFYVED (87 aa)). A disulfide bond links Cys-455 and Cys-475. Cystine bridges form between Cys-625–Cys-636, Cys-630–Cys-642, and Cys-644–Cys-653. One can recognise an EGF-like domain in the interval 625–654 (CSPAFCNKRGICNNKHHCHCNYLWDPPNCL). The chain crosses the membrane as a helical span at residues 675 to 695 (KFCYLCILLLIVLFILLCCLY). Topologically, residues 696–820 (RLCKKSKPIK…SQSQPPVTPS (125 aa)) are cytoplasmic. A disordered region spans residues 706–820 (KQQDVQTPSA…SQSQPPVTPS (115 aa)). Basic and acidic residues predominate over residues 715-727 (AKEEEKIQRRPHE). Residues 738–820 (PSQSQPPVTP…SQSQPPVTPS (83 aa)) show a composition bias toward low complexity. A run of 9 repeats spans residues 739–747 (SQSQPPVTP), 748–756 (SQSHPQVMP), 757–765 (SQSQPPVTP), 766–774 (SQSQPRVMP), 775–783 (SQSQPPVMP), 784–792 (SQSHPQLTP), 793–801 (SQSQPPVTP), 802–810 (SQRQPQLMP), and 811–819 (SQSQPPVTP). Positions 739-819 (SQSQPPVTPS…PSQSQPPVTP (81 aa)) are 9 X 9 AA approximate repeats.

In terms of tissue distribution, expressed specifically in testes.

The protein resides in the membrane. In terms of biological role, may be involved in spermatogenesis and fertilization. Seems to be a non catalytic metalloprotease-like protein. This Homo sapiens (Human) protein is Disintegrin and metalloproteinase domain-containing protein 29 (ADAM29).